The primary structure comprises 661 residues: Arginine--tRNA ligase, cytoplasmic (661 aa).

Positions 1–72 (MEARVAEAAA…QEEQSKTVKS (72 aa)) are could be involved in the assembly of the multisynthetase complex. L-arginine contacts are provided by residues 201 to 203 (SPN), His-212, Tyr-385, Asp-389, and Gln-413. The short motif at 202–213 (PNIAKEMHVGHL) is the 'HIGH' region element. Residues 530–544 (NTAAYLLYAFTRIRA) form an interaction with tRNA region.

The protein belongs to the class-I aminoacyl-tRNA synthetase family. In terms of assembly, monomer; also part of a multisubunit complex that groups tRNA ligases for Arg, Asp, Glu, Gln, Ile, Leu, Lys, Met and Pro.

It localises to the cytoplasm. It is found in the cytosol. It catalyses the reaction tRNA(Arg) + L-arginine + ATP = L-arginyl-tRNA(Arg) + AMP + diphosphate. Its function is as follows. Forms part of a macromolecular complex that catalyzes the attachment of specific amino acids to cognate tRNAs during protein synthesis. In Gallus gallus (Chicken), this protein is Arginine--tRNA ligase, cytoplasmic (RARS1).